A 94-amino-acid polypeptide reads, in one-letter code: Co-chaperonin GroES (94 aa).

The protein belongs to the GroES chaperonin family. Heptamer of 7 subunits arranged in a ring. Interacts with the chaperonin GroEL.

Its subcellular location is the cytoplasm. Functionally, together with the chaperonin GroEL, plays an essential role in assisting protein folding. The GroEL-GroES system forms a nano-cage that allows encapsulation of the non-native substrate proteins and provides a physical environment optimized to promote and accelerate protein folding. GroES binds to the apical surface of the GroEL ring, thereby capping the opening of the GroEL channel. This chain is Co-chaperonin GroES, found in Parageobacillus thermoglucosidasius (Geobacillus thermoglucosidasius).